The primary structure comprises 267 residues: Hydroxyethylthiazole kinase 2 (267 aa).

Residue M41 participates in substrate binding. Residues K116 and T166 each contribute to the ATP site. Substrate is bound at residue G193.

Belongs to the Thz kinase family. Mg(2+) is required as a cofactor.

It catalyses the reaction 5-(2-hydroxyethyl)-4-methylthiazole + ATP = 4-methyl-5-(2-phosphooxyethyl)-thiazole + ADP + H(+). It participates in cofactor biosynthesis; thiamine diphosphate biosynthesis; 4-methyl-5-(2-phosphoethyl)-thiazole from 5-(2-hydroxyethyl)-4-methylthiazole: step 1/1. In terms of biological role, catalyzes the phosphorylation of the hydroxyl group of 4-methyl-5-beta-hydroxyethylthiazole (THZ). This Streptococcus pneumoniae (strain JJA) protein is Hydroxyethylthiazole kinase 2.